A 316-amino-acid polypeptide reads, in one-letter code: Ribosomal RNA small subunit methyltransferase H (316 aa).

S-adenosyl-L-methionine-binding positions include 35-37, Asp-55, Phe-84, Asp-105, and Gln-112; that span reads AGH.

It belongs to the methyltransferase superfamily. RsmH family.

The protein resides in the cytoplasm. It carries out the reaction cytidine(1402) in 16S rRNA + S-adenosyl-L-methionine = N(4)-methylcytidine(1402) in 16S rRNA + S-adenosyl-L-homocysteine + H(+). Functionally, specifically methylates the N4 position of cytidine in position 1402 (C1402) of 16S rRNA. The sequence is that of Ribosomal RNA small subunit methyltransferase H from Streptococcus pneumoniae (strain Hungary19A-6).